Reading from the N-terminus, the 196-residue chain is Mitochondrial intermembrane space cysteine motif-containing protein MIX23 (196 aa).

The Cx14C motif motif lies at 99–114 (CEKEAAEMKNETDQQC). The Cx13C motif signature appears at 178 to 192 (CEQNNDYLKEFTQFC).

This sequence belongs to the MIX23 family.

The protein localises to the mitochondrion intermembrane space. In terms of biological role, regulator of the mitochondrial protein import machinery that is localized in the mitochondrial intermembrane space (IMS) and facilitates the transport of proteins from the cytosol into the mitochondrial matrix. Not essential for mitochondrial protein import but induced and required when mitochondrial import is compromised. Stimulates or stabilizes the translocation into the mitochondria of proteins such as OXA1, ATP1 and COX12. The sequence is that of Mitochondrial intermembrane space cysteine motif-containing protein MIX23 from Saccharomyces cerevisiae (strain ATCC 204508 / S288c) (Baker's yeast).